Consider the following 301-residue polypeptide: Ribosomal protein L11 methyltransferase (301 aa).

Positions 130, 151, 172, and 239 each coordinate S-adenosyl-L-methionine.

Belongs to the methyltransferase superfamily. PrmA family.

It is found in the cytoplasm. It carries out the reaction L-lysyl-[protein] + 3 S-adenosyl-L-methionine = N(6),N(6),N(6)-trimethyl-L-lysyl-[protein] + 3 S-adenosyl-L-homocysteine + 3 H(+). Methylates ribosomal protein L11. This is Ribosomal protein L11 methyltransferase from Campylobacter hominis (strain ATCC BAA-381 / DSM 21671 / CCUG 45161 / LMG 19568 / NCTC 13146 / CH001A).